The following is a 147-amino-acid chain: Large ribosomal subunit protein uL16 (147 aa).

This sequence belongs to the universal ribosomal protein uL16 family. As to quaternary structure, part of the 50S ribosomal subunit.

Functionally, binds 23S rRNA and is also seen to make contacts with the A and possibly P site tRNAs. This is Large ribosomal subunit protein uL16 from Clostridium acetobutylicum (strain ATCC 824 / DSM 792 / JCM 1419 / IAM 19013 / LMG 5710 / NBRC 13948 / NRRL B-527 / VKM B-1787 / 2291 / W).